A 38-amino-acid polypeptide reads, in one-letter code: Glucagon-like peptide (38 aa).

It belongs to the glucagon family.

It localises to the secreted. The sequence is that of Glucagon-like peptide from Hydrolagus colliei (Spotted ratfish).